A 400-amino-acid polypeptide reads, in one-letter code: CCA-adding enzyme (400 aa).

The ATP site is built by Gly28 and Arg31. CTP is bound by residues Gly28 and Arg31. The Mg(2+) site is built by Asp41 and Asp43. ATP contacts are provided by Arg112, Asp155, Arg158, Arg161, and Arg164. CTP-binding residues include Arg112, Asp155, Arg158, Arg161, and Arg164.

It belongs to the tRNA nucleotidyltransferase/poly(A) polymerase family. Bacterial CCA-adding enzyme type 3 subfamily. Homodimer. Requires Mg(2+) as cofactor.

The catalysed reaction is a tRNA precursor + 2 CTP + ATP = a tRNA with a 3' CCA end + 3 diphosphate. It carries out the reaction a tRNA with a 3' CCA end + 2 CTP + ATP = a tRNA with a 3' CCACCA end + 3 diphosphate. In terms of biological role, catalyzes the addition and repair of the essential 3'-terminal CCA sequence in tRNAs without using a nucleic acid template. Adds these three nucleotides in the order of C, C, and A to the tRNA nucleotide-73, using CTP and ATP as substrates and producing inorganic pyrophosphate. tRNA 3'-terminal CCA addition is required both for tRNA processing and repair. Also involved in tRNA surveillance by mediating tandem CCA addition to generate a CCACCA at the 3' terminus of unstable tRNAs. While stable tRNAs receive only 3'-terminal CCA, unstable tRNAs are marked with CCACCA and rapidly degraded. The chain is CCA-adding enzyme from Staphylococcus aureus (strain COL).